The sequence spans 342 residues: MRTSRVVHVVSCHAEGEVGDVIVGGVAPPPGETVWDQSRWIARDETLRNFVLNEPRGGVFRHVNLLVPPKDPRAQMGWIIMEPADTPPMSGSNAICVATVLLDTGIIPMQEPITRMVLEPPGGLIEVEAECRGGKAERIRVRNVPSFADRLDARIEVEGLGTITVDTAYGGDSFVLVDAASVGMRIAPDQARDLAEMGVRITRAANEQLGFRHPANDWSHISFCQFTDPLSERDGVLYGRNAVAIRPGKIDRSPTGTGCSARMAVLHARGRMKPGDRFVGRSIIDTEFHCSIADEVELNGKRAIRPIISGRAWVIGTKQLMVDPDDPFQNGYRLSDTWPMDL.

S90 (proton acceptor) is an active-site residue. Substrate-binding positions include 91-92 (GS), D251, and 256-257 (GT).

This sequence belongs to the proline racemase family.

The enzyme catalyses trans-3-hydroxy-L-proline = 1-pyrroline-2-carboxylate + H2O. In terms of biological role, catalyzes the dehydration of trans-3-hydroxy-L-proline (t3LHyp) to Delta(1)-pyrroline-2-carboxylate (Pyr2C). Is likely involved in a degradation pathway that converts t3LHyp to L-proline, which would allow P.denitrificans to grow on t3LHyp as a sole carbon source. Displays neither proline racemase activity nor 4-hydroxyproline 2-epimerase activity. In Paracoccus denitrificans (strain Pd 1222), this protein is Trans-3-hydroxy-L-proline dehydratase.